A 72-amino-acid chain; its full sequence is Translation initiation factor IF-1 (72 aa).

The S1-like domain maps to 1–72 (MAKEDSIRMQ…NKGRIVYRER (72 aa)).

Belongs to the IF-1 family. Component of the 30S ribosomal translation pre-initiation complex which assembles on the 30S ribosome in the order IF-2 and IF-3, IF-1 and N-formylmethionyl-tRNA(fMet); mRNA recruitment can occur at any time during PIC assembly.

It is found in the cytoplasm. In terms of biological role, one of the essential components for the initiation of protein synthesis. Stabilizes the binding of IF-2 and IF-3 on the 30S subunit to which N-formylmethionyl-tRNA(fMet) subsequently binds. Helps modulate mRNA selection, yielding the 30S pre-initiation complex (PIC). Upon addition of the 50S ribosomal subunit IF-1, IF-2 and IF-3 are released leaving the mature 70S translation initiation complex. In Halorhodospira halophila (strain DSM 244 / SL1) (Ectothiorhodospira halophila (strain DSM 244 / SL1)), this protein is Translation initiation factor IF-1.